Here is a 1192-residue protein sequence, read N- to C-terminus: Pyruvate carboxylase (1192 aa).

A disordered region spans residues 1 to 23; the sequence is MAAPRQPEEAVDDTEFIDDHHDQ. The Biotin carboxylation domain maps to 40 to 492; it reads QFQKILVANR…WTTFIDDTPE (453 aa). Positions 158, 242, and 277 each coordinate ATP. An ATP-grasp domain is found at 162-359; sequence RQLAIRCDVP…IVAAQIQIAA (198 aa). The active site involves arginine 334. The Pyruvate carboxyltransferase domain occupies 578 to 846; that stretch reads CLIMDTTWRD…DPGLNSAQVR (269 aa). Residues 586–590 and arginine 659 each bind substrate; that span reads RDAHQ. Position 587 (aspartate 587) interacts with a divalent metal cation. 3 residues coordinate a divalent metal cation: lysine 755, histidine 785, and histidine 787. Residue lysine 755 is modified to N6-carboxylysine. Threonine 920 provides a ligand contact to substrate. Positions 1115–1190 constitute a Biotinyl-binding domain; it reads KAELGDSSQV…DGQDLVCKIV (76 aa). Lysine 1156 carries the post-translational modification N6-biotinyllysine.

The cofactor is biotin. Requires Zn(2+) as cofactor.

The protein resides in the cytoplasm. The catalysed reaction is hydrogencarbonate + pyruvate + ATP = oxaloacetate + ADP + phosphate + H(+). The protein operates within carbohydrate biosynthesis; gluconeogenesis. Its function is as follows. Pyruvate carboxylase catalyzes a 2-step reaction, involving the ATP-dependent carboxylation of the covalently attached biotin in the first step and the transfer of the carboxyl group to pyruvate in the second. This Aspergillus niger protein is Pyruvate carboxylase (pyc).